A 227-amino-acid polypeptide reads, in one-letter code: Phosphoribosylformylglycinamidine synthase subunit PurQ (227 aa).

The Glutamine amidotransferase type-1 domain occupies 3–225; the sequence is FAVIVFPGSN…LKQWRETYVV (223 aa). C86 serves as the catalytic Nucleophile. Catalysis depends on residues H194 and E196.

In terms of assembly, part of the FGAM synthase complex composed of 1 PurL, 1 PurQ and 2 PurS subunits.

The protein localises to the cytoplasm. The enzyme catalyses N(2)-formyl-N(1)-(5-phospho-beta-D-ribosyl)glycinamide + L-glutamine + ATP + H2O = 2-formamido-N(1)-(5-O-phospho-beta-D-ribosyl)acetamidine + L-glutamate + ADP + phosphate + H(+). It carries out the reaction L-glutamine + H2O = L-glutamate + NH4(+). Its pathway is purine metabolism; IMP biosynthesis via de novo pathway; 5-amino-1-(5-phospho-D-ribosyl)imidazole from N(2)-formyl-N(1)-(5-phospho-D-ribosyl)glycinamide: step 1/2. In terms of biological role, part of the phosphoribosylformylglycinamidine synthase complex involved in the purines biosynthetic pathway. Catalyzes the ATP-dependent conversion of formylglycinamide ribonucleotide (FGAR) and glutamine to yield formylglycinamidine ribonucleotide (FGAM) and glutamate. The FGAM synthase complex is composed of three subunits. PurQ produces an ammonia molecule by converting glutamine to glutamate. PurL transfers the ammonia molecule to FGAR to form FGAM in an ATP-dependent manner. PurS interacts with PurQ and PurL and is thought to assist in the transfer of the ammonia molecule from PurQ to PurL. The protein is Phosphoribosylformylglycinamidine synthase subunit PurQ of Bacillus mycoides (strain KBAB4) (Bacillus weihenstephanensis).